We begin with the raw amino-acid sequence, 465 residues long: MARTHFIFLLLVALLSTTFPSSSSSREQEKDRIKALPGQPKVAFSQYSGYVNVNQSHGRALFYWLTESSSPSPHTKPLLLWLNGGPGCSSIAYGASEEIGPFRINKTGSNLYLNKFAWNKDANLLFLESPAGVGYSYTNTSSDLKDSGDERTAQDNLIFLIKWLSRFPQYKYRDFYIAGESYAGHYVPQLAKKINDYNKAFSKPIINLKGFLVGNAVTDNQYDSIGTVTYWWTHAIISDKSYKSILKYCNFTVERVSDDCDNAVNYAMNHEFGDIDQYSIYTPTCVAAQQKKNTTGFFVRMKNTLLRRRLVSGYDPCTESYAEKYFNRPDVQRAMHANVTGIRYKWTACSDVLIKTWKDSDKTMLPIYKELAASGLRIWIFSGDTDSVVPVTATRFSLSHLNLPVKTRWYPWYTDNQVGGWTEVYKGLTFATVRGAGHEVPLFEPKRALILFRSFLAGKELPRSY.

The signal sequence occupies residues 1–24; sequence MARTHFIFLLLVALLSTTFPSSSS. 3 N-linked (GlcNAc...) asparagine glycosylation sites follow: Asn-54, Asn-105, and Asn-139. 3 disulfides stabilise this stretch: Cys-88/Cys-349, Cys-249/Cys-260, and Cys-285/Cys-317. Ser-181 is an active-site residue. 3 N-linked (GlcNAc...) asparagine glycosylation sites follow: Asn-250, Asn-293, and Asn-338. The propeptide at 287–316 is linker peptide; sequence AAQQKKNTTGFFVRMKNTLLRRRLVSGYDP. Residues Asp-386 and His-438 contribute to the active site.

Belongs to the peptidase S10 family. As to quaternary structure, heterodimer. In terms of processing, N-glycosylated. Expressed in shoots, leaves, cauline leaves, siliques and flowers. Expressed a low levels in roots and stems.

It is found in the secreted. The protein localises to the extracellular space. The catalysed reaction is Preferential release of a C-terminal arginine or lysine residue.. Completely inhibited by phenylmethylsulfonyl fluoride (PMSF) and partially by leupeptin. Active serine carboxypeptidase with broad substrate preference, including basic and hydrophilic groups. Processes a protein involved in an early event in the brassinosteroid signaling pathway. This chain is Serine carboxypeptidase 24 (SCPL24), found in Arabidopsis thaliana (Mouse-ear cress).